We begin with the raw amino-acid sequence, 862 residues long: Probable inorganic carbon transporter subunit DabA (862 aa).

C365, D367, H540, and C555 together coordinate Zn(2+).

Belongs to the inorganic carbon transporter (TC 9.A.2) DabA family. In terms of assembly, forms a complex with DabB. The cofactor is Zn(2+).

It localises to the cell inner membrane. Part of an energy-coupled inorganic carbon pump. The chain is Probable inorganic carbon transporter subunit DabA from Vibrio cholerae serotype O1 (strain ATCC 39315 / El Tor Inaba N16961).